The chain runs to 541 residues: Chaperonin GroEL 5 (541 aa).

Residues 30–33, Gly415, and Asp496 contribute to the ATP site; that span reads TLGP.

This sequence belongs to the chaperonin (HSP60) family. In terms of assembly, forms a cylinder of 14 subunits composed of two heptameric rings stacked back-to-back. Interacts with the co-chaperonin GroES.

It localises to the cytoplasm. It catalyses the reaction ATP + H2O + a folded polypeptide = ADP + phosphate + an unfolded polypeptide.. Its function is as follows. Together with its co-chaperonin GroES, plays an essential role in assisting protein folding. The GroEL-GroES system forms a nano-cage that allows encapsulation of the non-native substrate proteins and provides a physical environment optimized to promote and accelerate protein folding. This chain is Chaperonin GroEL 5, found in Bradyrhizobium diazoefficiens (strain JCM 10833 / BCRC 13528 / IAM 13628 / NBRC 14792 / USDA 110).